A 674-amino-acid polypeptide reads, in one-letter code: ATP-dependent DNA helicase Rep (674 aa).

Residues 1–280 (MRLNPGQQHA…IKLEQNYRSS (280 aa)) enclose the UvrD-like helicase ATP-binding domain. ATP-binding positions include 22–29 (AGAGSGKT) and Arg278. One can recognise a UvrD-like helicase C-terminal domain in the interval 281–562 (GRILKAANIL…QLMTLHASKG (282 aa)).

This sequence belongs to the helicase family. UvrD subfamily. In terms of assembly, homodimer.

It catalyses the reaction Couples ATP hydrolysis with the unwinding of duplex DNA by translocating in the 3'-5' direction.. It carries out the reaction ATP + H2O = ADP + phosphate + H(+). Functionally, rep helicase is a single-stranded DNA-dependent ATPase involved in DNA replication; it can initiate unwinding at a nick in the DNA. It binds to the single-stranded DNA and acts in a progressive fashion along the DNA in the 3' to 5' direction. In Salmonella typhimurium (strain LT2 / SGSC1412 / ATCC 700720), this protein is ATP-dependent DNA helicase Rep.